We begin with the raw amino-acid sequence, 1342 residues long: DNA-directed RNA polymerase subunit beta (1342 aa).

The protein belongs to the RNA polymerase beta chain family. As to quaternary structure, the RNAP catalytic core consists of 2 alpha, 1 beta, 1 beta' and 1 omega subunit. When a sigma factor is associated with the core the holoenzyme is formed, which can initiate transcription.

It catalyses the reaction RNA(n) + a ribonucleoside 5'-triphosphate = RNA(n+1) + diphosphate. DNA-dependent RNA polymerase catalyzes the transcription of DNA into RNA using the four ribonucleoside triphosphates as substrates. In Tolumonas auensis (strain DSM 9187 / NBRC 110442 / TA 4), this protein is DNA-directed RNA polymerase subunit beta.